The following is a 56-amino-acid chain: Large ribosomal subunit protein bL32 (56 aa).

Residues 1–29 (MAVQQNKPSRSKRGMRRSHDALTTSSVSV) are disordered.

It belongs to the bacterial ribosomal protein bL32 family.

This is Large ribosomal subunit protein bL32 from Pectobacterium atrosepticum (strain SCRI 1043 / ATCC BAA-672) (Erwinia carotovora subsp. atroseptica).